The sequence spans 409 residues: Threonine dehydratase-like protein AKTS1-1 (409 aa).

Residues M1–R21 form a disordered region. N6-(pyridoxal phosphate)lysine is present on K111. Pyridoxal 5'-phosphate contacts are provided by residues N138, G239 to L243, and S368.

The protein belongs to the serine/threonine dehydratase family. Pyridoxal 5'-phosphate serves as cofactor.

The protein operates within mycotoxin biosynthesis. Functionally, threonine dehydratase-like protein; part of the gene clusters that mediate the biosynthesis of the host-selective toxins (HSTs) AK-toxins responsible for Japanese pear black spot disease by the Japanese pear pathotype. AK-toxins are esters of 9,10-epoxy 8-hydroxy 9-methyldecatrienoic acid (EDA). On cellular level, AK-toxins affect plasma membrane of susceptible cells and cause a sudden increase in loss of K(+) after a few minutes of toxin treatment. The acyl-CoA ligase AKT1, the hydrolase AKT2 and enoyl-CoA hydratase AKT3 are all involved in the biosynthesis of the AK-, AF- and ACT-toxin common 9,10-epoxy-8-hydroxy-9-methyl-decatrienoic acid (EDA) structural moiety. Part of the EDA biosynthesis occurs in the peroxisome since these 3 enzymes are localized in peroxisomes. The exact roles of the 3 enzymes, as well as of additional AK-toxin clusters enzymes, including AKT4, AKT6 and AKTS1, have still to be elucidated. The Cytochrome P450 monooxygenase AKT7 on the other side functions to limit production of EDA and AK-toxin, probably via the catalysis of a side reaction of EDA or its precursor. This chain is Threonine dehydratase-like protein AKTS1-1, found in Alternaria alternata (Alternaria rot fungus).